The following is a 216-amino-acid chain: Pyrophosphatase PpaX (216 aa).

Aspartate 9 (nucleophile) is an active-site residue.

Belongs to the HAD-like hydrolase superfamily. PpaX family. It depends on Mg(2+) as a cofactor.

It carries out the reaction diphosphate + H2O = 2 phosphate + H(+). Its function is as follows. Hydrolyzes pyrophosphate formed during P-Ser-HPr dephosphorylation by HPrK/P. Might play a role in controlling the intracellular pyrophosphate pool. The sequence is that of Pyrophosphatase PpaX from Bacillus cereus (strain B4264).